Here is a 338-residue protein sequence, read N- to C-terminus: Lipoate-protein ligase A (338 aa).

The BPL/LPL catalytic domain occupies Pro29 to Val216. ATP-binding positions include Arg71, Gly76–Phe79, and Lys134. Residue Lys134 participates in (R)-lipoate binding.

It belongs to the LplA family. In terms of assembly, monomer.

Its subcellular location is the cytoplasm. The catalysed reaction is L-lysyl-[lipoyl-carrier protein] + (R)-lipoate + ATP = N(6)-[(R)-lipoyl]-L-lysyl-[lipoyl-carrier protein] + AMP + diphosphate + H(+). It functions in the pathway protein modification; protein lipoylation via exogenous pathway; protein N(6)-(lipoyl)lysine from lipoate: step 1/2. Its pathway is protein modification; protein lipoylation via exogenous pathway; protein N(6)-(lipoyl)lysine from lipoate: step 2/2. Its function is as follows. Catalyzes both the ATP-dependent activation of exogenously supplied lipoate to lipoyl-AMP and the transfer of the activated lipoyl onto the lipoyl domains of lipoate-dependent enzymes. This chain is Lipoate-protein ligase A, found in Escherichia coli O157:H7.